Reading from the N-terminus, the 334-residue chain is Protein-methionine-sulfoxide reductase catalytic subunit MsrP (334 aa).

Positions 1-44 (MKKIRPLTEADVTAESAFFMQRRQVLKALGISAAALSLPSTAQA) form a signal peptide, tat-type signal. Residues N88, 91–92 (YE), C146, T181, N233, R238, and 249–251 (GIK) contribute to the Mo-molybdopterin site.

This sequence belongs to the MsrP family. Heterodimer of a catalytic subunit (MsrP) and a heme-binding subunit (MsrQ). It depends on Mo-molybdopterin as a cofactor. In terms of processing, predicted to be exported by the Tat system. The position of the signal peptide cleavage has not been experimentally proven.

The protein resides in the periplasm. The enzyme catalyses L-methionyl-[protein] + a quinone + H2O = L-methionyl-(S)-S-oxide-[protein] + a quinol. It carries out the reaction L-methionyl-[protein] + a quinone + H2O = L-methionyl-(R)-S-oxide-[protein] + a quinol. Part of the MsrPQ system that repairs oxidized periplasmic proteins containing methionine sulfoxide residues (Met-O), using respiratory chain electrons. Thus protects these proteins from oxidative-stress damage caused by reactive species of oxygen and chlorine generated by the host defense mechanisms. MsrPQ is essential for the maintenance of envelope integrity under bleach stress, rescuing a wide series of structurally unrelated periplasmic proteins from methionine oxidation, including the primary periplasmic chaperone SurA and the lipoprotein Pal. The catalytic subunit MsrP is non-stereospecific, being able to reduce both (R-) and (S-) diastereoisomers of methionine sulfoxide. The protein is Protein-methionine-sulfoxide reductase catalytic subunit MsrP of Salmonella agona (strain SL483).